A 531-amino-acid chain; its full sequence is Multidrug resistance protein fnx1 (531 aa).

Residues 1-30 (MVDQVNLATEQTSLLYPEVSRKKEELSVNK) are Cytoplasmic-facing. The chain crosses the membrane as a helical span at residues 31-51 (WTILPALWVGGFLSALDMTIV). The Lumenal portion of the chain corresponds to 52 to 225 (ASLYPVIGSE…NASLLSRIDY (174 aa)). Residues 226–246 (LGSFLLVTGITALVVTFNMGG) traverse the membrane as a helical segment. The Cytoplasmic portion of the chain corresponds to 247–252 (DAFPWV). The chain crosses the membrane as a helical span at residues 253–273 (SPVIITLLVSSVLILFAFYWV). The Lumenal segment spans residues 274-297 (EKNIAVEPIAPVEILSQPTPLNVC). Residues 298–318 (LGNFFNAFCSFVIVYELPLFF) traverse the membrane as a helical segment. The Cytoplasmic portion of the chain corresponds to 319–360 (ETTLLMPSSEAGVRIFPYVISTSVGSLCSGLYMKKTGRYRNL). A helical membrane pass occupies residues 361 to 381 (VIAGFFFMLMGIVSFAVLTSF). Over 382-385 (GHRT) the chain is Lumenal. The helical transmembrane segment at 386–406 (PLILISLCLAMTGCSYGMNLT) threads the bilayer. Over 407-496 (STLIAIISSL…QKLVIKSYAT (90 aa)) the chain is Cytoplasmic. The helical transmembrane segment at 497 to 517 (AFTWTFALVAIIAFAGFWCSL) threads the bilayer. The Lumenal portion of the chain corresponds to 518 to 531 (RIKQFYLHTSVDRS).

It belongs to the major facilitator superfamily.

It localises to the vacuole membrane. In terms of biological role, efflux transporter. Confers resistance to a variety of toxic compounds. In Schizosaccharomyces pombe (strain 972 / ATCC 24843) (Fission yeast), this protein is Multidrug resistance protein fnx1 (fnx1).